The primary structure comprises 810 residues: Probable dehydratase YbiW (810 aa).

Residues 11-682 enclose the PFL domain; the sequence is DRIKAHKNAL…QTMATPDGRK (672 aa). A disordered region spans residues 677 to 699; sequence TPDGRKAHTPLAEGASPASGTDH. The region spanning 689-810 is the Glycine radical domain; that stretch reads EGASPASGTD…DIIARTEHML (122 aa). Glycine radical is present on Gly-786.

The protein belongs to the glycyl radical enzyme (GRE) family.

Probably shows dehydratase activity. In Escherichia coli (strain K12), this protein is Probable dehydratase YbiW (ybiW).